We begin with the raw amino-acid sequence, 314 residues long: BURP domain-containing protein 8 (314 aa).

The signal sequence occupies residues 1–16 (MDLVRLTSLLPPSVMG). The region spanning 98–314 (FFLEKDLFPG…PLGDMLWVRN (217 aa)) is the BURP domain.

Expressed in shoot and panicles.

The sequence is that of BURP domain-containing protein 8 (BURP8) from Oryza sativa subsp. japonica (Rice).